Here is a 444-residue protein sequence, read N- to C-terminus: 3-phosphoshikimate 1-carboxyvinyltransferase (444 aa).

Positions 32, 33, and 37 each coordinate 3-phosphoshikimate. Lysine 32 is a binding site for phosphoenolpyruvate. The phosphoenolpyruvate site is built by glycine 105 and arginine 133. 4 residues coordinate 3-phosphoshikimate: serine 178, glutamine 180, aspartate 326, and lysine 353. Glutamine 180 provides a ligand contact to phosphoenolpyruvate. Aspartate 326 acts as the Proton acceptor in catalysis. Residues arginine 357 and arginine 398 each coordinate phosphoenolpyruvate.

The protein belongs to the EPSP synthase family. Monomer.

The protein localises to the cytoplasm. The catalysed reaction is 3-phosphoshikimate + phosphoenolpyruvate = 5-O-(1-carboxyvinyl)-3-phosphoshikimate + phosphate. Its pathway is metabolic intermediate biosynthesis; chorismate biosynthesis; chorismate from D-erythrose 4-phosphate and phosphoenolpyruvate: step 6/7. In terms of biological role, catalyzes the transfer of the enolpyruvyl moiety of phosphoenolpyruvate (PEP) to the 5-hydroxyl of shikimate-3-phosphate (S3P) to produce enolpyruvyl shikimate-3-phosphate and inorganic phosphate. The polypeptide is 3-phosphoshikimate 1-carboxyvinyltransferase (Nitrosococcus oceani (strain ATCC 19707 / BCRC 17464 / JCM 30415 / NCIMB 11848 / C-107)).